Consider the following 334-residue polypeptide: Aspartate carbamoyltransferase catalytic subunit (334 aa).

Residues Arg71 and Thr72 each coordinate carbamoyl phosphate. An L-aspartate-binding site is contributed by Lys99. Arg121, His151, and Gln154 together coordinate carbamoyl phosphate. L-aspartate-binding residues include Arg184 and Arg239. Carbamoyl phosphate-binding residues include Gly280 and Pro281.

Belongs to the aspartate/ornithine carbamoyltransferase superfamily. ATCase family. As to quaternary structure, heterododecamer (2C3:3R2) of six catalytic PyrB chains organized as two trimers (C3), and six regulatory PyrI chains organized as three dimers (R2).

The enzyme catalyses carbamoyl phosphate + L-aspartate = N-carbamoyl-L-aspartate + phosphate + H(+). It participates in pyrimidine metabolism; UMP biosynthesis via de novo pathway; (S)-dihydroorotate from bicarbonate: step 2/3. Functionally, catalyzes the condensation of carbamoyl phosphate and aspartate to form carbamoyl aspartate and inorganic phosphate, the committed step in the de novo pyrimidine nucleotide biosynthesis pathway. In Pseudomonas putida (Arthrobacter siderocapsulatus), this protein is Aspartate carbamoyltransferase catalytic subunit.